Here is a 236-residue protein sequence, read N- to C-terminus: Purine nucleoside phosphorylase DeoD-type (236 aa).

Residue His4 participates in a purine D-ribonucleoside binding. Residues Gly20, Arg24, Arg43, and 87 to 90 (RVGS) each bind phosphate. A purine D-ribonucleoside is bound by residues 179 to 181 (EME) and 203 to 204 (SD). The active-site Proton donor is the Asp204.

Belongs to the PNP/UDP phosphorylase family. As to quaternary structure, homohexamer; trimer of homodimers.

It carries out the reaction a purine D-ribonucleoside + phosphate = a purine nucleobase + alpha-D-ribose 1-phosphate. The catalysed reaction is a purine 2'-deoxy-D-ribonucleoside + phosphate = a purine nucleobase + 2-deoxy-alpha-D-ribose 1-phosphate. Its function is as follows. Catalyzes the reversible phosphorolytic breakdown of the N-glycosidic bond in the beta-(deoxy)ribonucleoside molecules, with the formation of the corresponding free purine bases and pentose-1-phosphate. This Limosilactobacillus reuteri (strain DSM 20016) (Lactobacillus reuteri) protein is Purine nucleoside phosphorylase DeoD-type.